The primary structure comprises 213 residues: 3,4-dihydroxy-2-butanone 4-phosphate synthase (213 aa).

D-ribulose 5-phosphate is bound by residues 37–38 (RE), Asp-42, 150–154 (RAGHT), and Glu-174. Glu-38 contributes to the Mg(2+) binding site. His-153 is a Mg(2+) binding site.

Belongs to the DHBP synthase family. As to quaternary structure, homodimer. The cofactor is Mg(2+). Requires Mn(2+) as cofactor.

It catalyses the reaction D-ribulose 5-phosphate = (2S)-2-hydroxy-3-oxobutyl phosphate + formate + H(+). It participates in cofactor biosynthesis; riboflavin biosynthesis; 2-hydroxy-3-oxobutyl phosphate from D-ribulose 5-phosphate: step 1/1. Functionally, catalyzes the conversion of D-ribulose 5-phosphate to formate and 3,4-dihydroxy-2-butanone 4-phosphate. The sequence is that of 3,4-dihydroxy-2-butanone 4-phosphate synthase from Wigglesworthia glossinidia brevipalpis.